The primary structure comprises 475 residues: Ribulose bisphosphate carboxylase large chain (475 aa).

Positions 1–2 (MS) are excised as a propeptide. Proline 3 carries the N-acetylproline modification. Lysine 14 carries the post-translational modification N6,N6,N6-trimethyllysine. Residues asparagine 123 and threonine 173 each coordinate substrate. The Proton acceptor role is filled by lysine 175. Lysine 177 contacts substrate. Residues lysine 201, aspartate 203, and glutamate 204 each coordinate Mg(2+). Lysine 201 is modified (N6-carboxylysine). Histidine 294 acts as the Proton acceptor in catalysis. 3 residues coordinate substrate: arginine 295, histidine 327, and serine 379.

Belongs to the RuBisCO large chain family. Type I subfamily. In terms of assembly, heterohexadecamer of 8 large chains and 8 small chains; disulfide-linked. The disulfide link is formed within the large subunit homodimers. It depends on Mg(2+) as a cofactor. The disulfide bond which can form in the large chain dimeric partners within the hexadecamer appears to be associated with oxidative stress and protein turnover.

The protein localises to the plastid. It is found in the chloroplast. The catalysed reaction is 2 (2R)-3-phosphoglycerate + 2 H(+) = D-ribulose 1,5-bisphosphate + CO2 + H2O. It catalyses the reaction D-ribulose 1,5-bisphosphate + O2 = 2-phosphoglycolate + (2R)-3-phosphoglycerate + 2 H(+). Its function is as follows. RuBisCO catalyzes two reactions: the carboxylation of D-ribulose 1,5-bisphosphate, the primary event in carbon dioxide fixation, as well as the oxidative fragmentation of the pentose substrate in the photorespiration process. Both reactions occur simultaneously and in competition at the same active site. The protein is Ribulose bisphosphate carboxylase large chain of Angiopteris evecta (Mule's foot fern).